Reading from the N-terminus, the 197-residue chain is Xanthine phosphoribosyltransferase (197 aa).

Xanthine-binding residues include Leu-20 and Asn-27. Position 128-132 (128-132) interacts with 5-phospho-alpha-D-ribose 1-diphosphate; sequence ANGQA. Lys-156 contacts xanthine.

It belongs to the purine/pyrimidine phosphoribosyltransferase family. Xpt subfamily. As to quaternary structure, homodimer.

The protein localises to the cytoplasm. It catalyses the reaction XMP + diphosphate = xanthine + 5-phospho-alpha-D-ribose 1-diphosphate. It participates in purine metabolism; XMP biosynthesis via salvage pathway; XMP from xanthine: step 1/1. Its function is as follows. Converts the preformed base xanthine, a product of nucleic acid breakdown, to xanthosine 5'-monophosphate (XMP), so it can be reused for RNA or DNA synthesis. In Bacillus cereus (strain B4264), this protein is Xanthine phosphoribosyltransferase.